A 193-amino-acid polypeptide reads, in one-letter code: MQNIKCVVVGDGAVGKTCMLISYTTNGFPSEYLPTVFDNYCANLMLDGKPYSLGLWDTAGQEEYDRLRPLSYPQTDVFLICFSIISQSSFENVSTKWFKEVNHHAPGVPIVLVGTKQDIRNDNDSIKKLKERNIELVPYEKGLEKAKEINAIYLEASALTQRGVKNVFDQCIRSVIYPNKLNKKPKKKTCTIM.

10-17 (GDGAVGKT) is a GTP binding site. Residues 32-40 (YLPTVFDNY) carry the Effector region motif. Residues 57–61 (DTAGQ) and 115–118 (TKQD) contribute to the GTP site. Cys190 carries the cysteine methyl ester modification. The S-geranylgeranyl cysteine moiety is linked to residue Cys190. A propeptide spans 191 to 193 (TIM) (removed in mature form).

It belongs to the small GTPase superfamily. Rho family.

Its subcellular location is the cell membrane. This Dictyostelium discoideum (Social amoeba) protein is Rho-related protein racF2 (racF2).